A 284-amino-acid chain; its full sequence is Cystinosin homolog (284 aa).

The next 7 helical transmembrane spans lie at 3–23 (ALSIISIIIGWIYFACWSLSF), 37–57 (IGLSFDFLLFNITGYACYSVF), 86–106 (IAFAIHGFVLTAITIIQCFIY), 116–136 (LGIGIATLIWVSLIVMTILGF), 139–159 (VFTWLWVINYYSYVKLFITFI), 181–201 (NVLLDFSGGVLSLLQMFLDVA), and 216–236 (LGLSLFSIAFDILFIIQHYIL). The 67-residue stretch at 4–70 (LSIISIIIGW…LYFDKLVKNE (67 aa)) folds into the PQ-loop 1 domain. Positions 154–208 (LFITFIKYIPQAYLNFKNKSTSGWSVHNVLLDFSGGVLSLLQMFLDVADSGNWNI) constitute a PQ-loop 2 domain. Residues 247–269 (NLNDNNIPNNNNNNNNNINNNTP) form a disordered region.

This sequence belongs to the cystinosin family.

The protein localises to the lysosome membrane. It carries out the reaction L-cystine(out) + H(+)(out) = L-cystine(in) + H(+)(in). Functionally, cystine/H(+) symporter that mediates export of cystine, the oxidized dimer of cysteine, from lysosomes. This chain is Cystinosin homolog (ctns), found in Dictyostelium discoideum (Social amoeba).